A 545-amino-acid chain; its full sequence is Chaperonin GroEL 2 (545 aa).

ATP-binding positions include 29–32 (TLGP), 86–90 (DGTTT), Gly413, 477–479 (DAA), and Asp493. Residues 526–545 (PEPAAAGHGHGHGHQHGPGF) are disordered. Residues 534-545 (GHGHGHQHGPGF) are compositionally biased toward basic residues.

It belongs to the chaperonin (HSP60) family. As to quaternary structure, forms a cylinder of 14 subunits composed of two heptameric rings stacked back-to-back. Interacts with the co-chaperonin GroES.

It localises to the cytoplasm. The catalysed reaction is ATP + H2O + a folded polypeptide = ADP + phosphate + an unfolded polypeptide.. Functionally, together with its co-chaperonin GroES, plays an essential role in assisting protein folding. The GroEL-GroES system forms a nano-cage that allows encapsulation of the non-native substrate proteins and provides a physical environment optimized to promote and accelerate protein folding. The sequence is that of Chaperonin GroEL 2 from Salinispora arenicola (strain CNS-205).